Consider the following 88-residue polypeptide: EMBRYO SURROUNDING FACTOR 1-like protein 11 (88 aa).

The signal sequence occupies residues 1–23; that stretch reads MISSSHFAIFCIILVSLFALQQY. Disulfide bonds link C44/C59, C49/C78, C57/C74, and C60/C67.

This sequence belongs to the MEG family. As to expression, expressed in stems.

This Arabidopsis thaliana (Mouse-ear cress) protein is EMBRYO SURROUNDING FACTOR 1-like protein 11 (ESFL11).